A 201-amino-acid chain; its full sequence is Protein lin-7 homolog B (201 aa).

The Kinase interacting site signature appears at 1–13 (MAALVEPLGLERE). Residues 10–65 (LEREVSRAVELLERLQRSGELPPQKLQALQRVLQSRFCSAIREVYEQLYDTLDITG) enclose the L27 domain. A PDZ domain is found at 93 to 175 (VVELPKTDEG…SVKLVVRYTP (83 aa)).

This sequence belongs to the lin-7 family. As to quaternary structure, forms a complex with CASK and CASKIN1. Component of the brain-specific heterotrimeric complex (LIN-10-LIN-2-LIN-7 complex) composed of at least APBA1, CASK, and LIN7, which associates with the motor protein KIF17 to transport vesicles along microtubules. Forms a heterotrimeric complex composed of MMP5, LIN7B and PATJ; the N-terminal L27 domain of PALS1 interacts with the L27 domain of PATJ and the C-terminal L27 domain of PALS1 interacts with the L27 domain of LIN7B. Forms a heterotrimeric complex with DLG1 and CASK via their L27 domains. Interacts with DLG4 and GRIN2B as well as CDH1 and CTNNB1, the channels KCNJ12/Kir2.2, KCNJ4/Kir2.3 and probably KCNJ2/Kir2.1 and SLC6A12/BGT-1 via its PDZ domain. The association of LIN7A with cadherin and beta-catenin is calcium-dependent, occurs at synaptic junctions and requires the actin cytoskeleton. Interacts with EGFR, ERBB2, ERBB3 and ERBB4 with both PDZ and KID domains. Interacts with ASIC3. Interacts with TOPK. Interacts with RTKN. Associates with KIF17 via APBA1. Interacts with APBA1. Interacts with MPP7. Interacts with DLG2. Interacts with DLG3.

The protein resides in the cell membrane. Its subcellular location is the basolateral cell membrane. The protein localises to the cell junction. It localises to the postsynaptic density membrane. It is found in the tight junction. In terms of biological role, plays a role in establishing and maintaining the asymmetric distribution of channels and receptors at the plasma membrane of polarized cells. Forms membrane-associated multiprotein complexes that may regulate delivery and recycling of proteins to the correct membrane domains. The tripartite complex composed of LIN7 (LIN7A, LIN7B or LIN7C), CASK and APBA1 associates with the motor protein KIF17 to transport vesicles containing N-methyl-D-aspartate (NMDA) receptor subunit NR2B along microtubules. This complex may have the potential to couple synaptic vesicle exocytosis to cell adhesion in brain. Ensures the proper localization of GRIN2B (subunit 2B of the NMDA receptor) to neuronal postsynaptic density and may function in localizing synaptic vesicles at synapses where it is recruited by beta-catenin and cadherin. Required to localize Kir2 channels, GABA transporter (SLC6A12) and EGFR/ERBB1, ERBB2, ERBB3 and ERBB4 to the basolateral membrane of epithelial cells. May increase the amplitude of ASIC3 acid-evoked currents by stabilizing the channel at the cell surface. The chain is Protein lin-7 homolog B (LIN7B) from Bos taurus (Bovine).